Here is a 453-residue protein sequence, read N- to C-terminus: O-methyltransferase bik3 (453 aa).

Positions 1–25 (MVSNGISNGTNGTNGTTTNGTNGVN) are disordered. Over residues 8–25 (NGTNGTNGTTTNGTNGVN) the composition is skewed to low complexity. Asp-305 contacts S-adenosyl-L-methionine. Catalysis depends on His-355, which acts as the Proton acceptor.

The protein belongs to the class I-like SAM-binding methyltransferase superfamily. Cation-independent O-methyltransferase family. COMT subfamily.

It functions in the pathway secondary metabolite biosynthesis. Functionally, O-methyltransferase; part of the gene cluster that mediates the biosynthesis of bikaverin, a red pigment also considered as a mycotoxin. The first stage is catalyzed by the polyketide synthase bik1, which catalyzes the formation of the intermediate SMA76a also knowm as pre-bikaverin. FAD-dependent monooxygenase bik2 might then be responsible for the oxidation of pre-bikaverin to oxo-pre-bikaverin which is in turn methylated by the O-methyltransferase bik3 to me-oxo-pre-bikaverin. A further cycle of oxydation and methylation by bik2 and bik3 leads to the final product of bikaverin, via a nor-bikaverin intermediate. This Gibberella fujikuroi (strain CBS 195.34 / IMI 58289 / NRRL A-6831) (Bakanae and foot rot disease fungus) protein is O-methyltransferase bik3.